The chain runs to 357 residues: Alanine racemase (357 aa).

The active-site Proton acceptor; specific for D-alanine is K33. K33 is subject to N6-(pyridoxal phosphate)lysine. R129 is a binding site for substrate. Y253 serves as the catalytic Proton acceptor; specific for L-alanine. M301 contacts substrate.

This sequence belongs to the alanine racemase family. It depends on pyridoxal 5'-phosphate as a cofactor.

The enzyme catalyses L-alanine = D-alanine. The protein operates within amino-acid biosynthesis; D-alanine biosynthesis; D-alanine from L-alanine: step 1/1. Functionally, catalyzes the interconversion of L-alanine and D-alanine. May also act on other amino acids. The chain is Alanine racemase (alr) from Pseudomonas entomophila (strain L48).